A 218-amino-acid polypeptide reads, in one-letter code: 3-dehydroquinate dehydratase (218 aa).

3-dehydroquinate contacts are provided by residues 29–31 (EFR) and R56. The active-site Proton donor/acceptor is the H116. Catalysis depends on K142, which acts as the Schiff-base intermediate with substrate. R180, S200, and Q204 together coordinate 3-dehydroquinate.

This sequence belongs to the type-I 3-dehydroquinase family. In terms of assembly, homodimer.

It catalyses the reaction 3-dehydroquinate = 3-dehydroshikimate + H2O. It participates in metabolic intermediate biosynthesis; chorismate biosynthesis; chorismate from D-erythrose 4-phosphate and phosphoenolpyruvate: step 3/7. In terms of biological role, involved in the third step of the chorismate pathway, which leads to the biosynthesis of aromatic amino acids. Catalyzes the cis-dehydration of 3-dehydroquinate (DHQ) and introduces the first double bond of the aromatic ring to yield 3-dehydroshikimate. This is 3-dehydroquinate dehydratase from Methanococcus maripaludis (strain C6 / ATCC BAA-1332).